The sequence spans 182 residues: Inosine/xanthosine triphosphatase (182 aa).

This sequence belongs to the YjjX NTPase family. Homodimer. Mg(2+) is required as a cofactor. It depends on Mn(2+) as a cofactor.

The enzyme catalyses XTP + H2O = XDP + phosphate + H(+). It carries out the reaction ITP + H2O = IDP + phosphate + H(+). Phosphatase that hydrolyzes non-canonical purine nucleotides such as XTP and ITP to their respective diphosphate derivatives. Probably excludes non-canonical purines from DNA/RNA precursor pool, thus preventing their incorporation into DNA/RNA and avoiding chromosomal lesions. This chain is Inosine/xanthosine triphosphatase, found in Vibrio parahaemolyticus serotype O3:K6 (strain RIMD 2210633).